Reading from the N-terminus, the 147-residue chain is MANVVAEGAYPYCRLTDQPLSVDEVLAAVSGPEQGGIVIFVGNVRDHNAGHDVTRLFYEAYPPMVIRTLMSIIGRCEDKAEGVRVAVAHRTGELQIGDAAVVIGASAPHRAEAFDAARMCIELLKQEVPIWKKEFSSTGAEWVGDRP.

Substrate contacts are provided by residues 43–45 (NVR), 109–110 (HR), Lys-125, and 132–134 (KKE).

This sequence belongs to the MoaE family. In terms of assembly, heterotetramer of 2 MoaD subunits and 2 MoaE subunits. Also stable as homodimer. The enzyme changes between these two forms during catalysis.

The enzyme catalyses 2 [molybdopterin-synthase sulfur-carrier protein]-C-terminal-Gly-aminoethanethioate + cyclic pyranopterin phosphate + H2O = molybdopterin + 2 [molybdopterin-synthase sulfur-carrier protein]-C-terminal Gly-Gly + 2 H(+). It functions in the pathway cofactor biosynthesis; molybdopterin biosynthesis. In terms of biological role, converts molybdopterin precursor Z into molybdopterin. This requires the incorporation of two sulfur atoms into precursor Z to generate a dithiolene group. The sulfur is provided by MoaD. The polypeptide is Molybdopterin synthase catalytic subunit 1 (moaE1) (Mycobacterium tuberculosis (strain ATCC 25618 / H37Rv)).